We begin with the raw amino-acid sequence, 498 residues long: Glycerol kinase (498 aa).

T12 is a binding site for ADP. The ATP site is built by T12, T13, and S14. Sn-glycerol 3-phosphate is bound at residue T12. ADP is bound at residue R16. R82, E83, Y134, and D244 together coordinate sn-glycerol 3-phosphate. Residues R82, E83, Y134, D244, and Q245 each contribute to the glycerol site. The ADP site is built by T266 and G310. ATP-binding residues include T266, G310, Q314, and G411. Positions 411 and 415 each coordinate ADP.

It belongs to the FGGY kinase family.

The catalysed reaction is glycerol + ATP = sn-glycerol 3-phosphate + ADP + H(+). It participates in polyol metabolism; glycerol degradation via glycerol kinase pathway; sn-glycerol 3-phosphate from glycerol: step 1/1. With respect to regulation, inhibited by fructose 1,6-bisphosphate (FBP). Its function is as follows. Key enzyme in the regulation of glycerol uptake and metabolism. Catalyzes the phosphorylation of glycerol to yield sn-glycerol 3-phosphate. The chain is Glycerol kinase from Roseiflexus sp. (strain RS-1).